The following is a 219-amino-acid chain: uncharacterized protein (219 aa).

In terms of domain architecture, ACT spans 4–79 (GLRIIAENKI…YIIEIEEEES (76 aa)).

This is an uncharacterized protein from Archaeoglobus fulgidus (strain ATCC 49558 / DSM 4304 / JCM 9628 / NBRC 100126 / VC-16).